Here is a 789-residue protein sequence, read N- to C-terminus: SH3 domain-containing protein 19 (789 aa).

Disordered stretches follow at residues 24–170, 209–404, and 472–497; these read TNTE…PPRL, DDDV…RPKP, and TPLD…SGAP. Serine 65 is subject to Phosphoserine. The segment covering 296–305 has biased composition (basic and acidic residues); it reads SHSDRTRNPE. Residues 335–351 are compositionally biased toward pro residues; that stretch reads WRPPPKGAPERPPPPKL. Over residues 352–361 the composition is skewed to low complexity; that stretch reads PASKSSNKNL. Serine 368 is subject to Phosphoserine. SH3 domains follow at residues 414–476, 494–553, 570–629, 660–719, and 729–788; these read LSVP…PLDE, SGAP…VIVD, AKGP…LVGD, PPGE…PCPA, and PKGR…FLQV. Residues 474–484 show a composition bias toward basic and acidic residues; that stretch reads LDERPRGRPND. A disordered region spans residues 635–663; sequence ANILSTKVPPKTKNEDPGSNSQDSSPPGE.

As to quaternary structure, interacts with ADAM12. Isoform 2 (but not isoform 1) interacts with ADAM9, ADAM10, ADAM15 and ADAM17. Interacts with SH3GL1 SH3 domain. Interacts via SH3 3 and SH3 4 or SH3 4 and SH3 5 domains with SOS2. Probably forms a trimeric complex with SH3GL1 and SOS2. Interacts with SH3YL1. As to expression, expressed in hair follicles.

Its subcellular location is the cytoplasm. In terms of biological role, may play a role in regulating A disintegrin and metalloproteases (ADAMs) in the signaling of EGFR-ligand shedding. May be involved in suppression of Ras-induced cellular transformation and Ras-mediated activation of ELK1. Plays a role in the regulation of cell morphology and cytoskeletal organization. In Mus musculus (Mouse), this protein is SH3 domain-containing protein 19 (Sh3d19).